Reading from the N-terminus, the 292-residue chain is Homoserine kinase (292 aa).

84–94 (PFSRGLGSSSA) is a binding site for ATP.

Belongs to the GHMP kinase family. Homoserine kinase subfamily.

The protein resides in the cytoplasm. It carries out the reaction L-homoserine + ATP = O-phospho-L-homoserine + ADP + H(+). It functions in the pathway amino-acid biosynthesis; L-threonine biosynthesis; L-threonine from L-aspartate: step 4/5. Catalyzes the ATP-dependent phosphorylation of L-homoserine to L-homoserine phosphate. This Campylobacter hominis (strain ATCC BAA-381 / DSM 21671 / CCUG 45161 / LMG 19568 / NCTC 13146 / CH001A) protein is Homoserine kinase.